The chain runs to 411 residues: Glutamate dehydrogenase (411 aa).

K102 is an active-site residue.

This sequence belongs to the Glu/Leu/Phe/Val dehydrogenases family.

The enzyme catalyses L-glutamate + NAD(+) + H2O = 2-oxoglutarate + NH4(+) + NADH + H(+). It carries out the reaction L-glutamate + NADP(+) + H2O = 2-oxoglutarate + NH4(+) + NADPH + H(+). This Zea mays (Maize) protein is Glutamate dehydrogenase (GDH1).